The primary structure comprises 692 residues: NADH-ubiquinone oxidoreductase chain 5 (692 aa).

17 helical membrane-spanning segments follow: residues 5–23 (IIIL…GRKV), 30–52 (ILGC…EVGF), 81–103 (LTVS…SIGY), 112–129 (RFFS…ILVT), 133–155 (YLLM…SFWF), 168–190 (FLTN…WSLG), 200–222 (LAPY…GAMA), 243–262 (VSAL…LLIR), 272–294 (TVLL…IGLF), 301–319 (IIAY…AIGL), 329–351 (LINH…HAVV), 364–386 (SFLP…FPFM), 409–431 (NVYF…VIYL), 452–471 (IFLS…FGYL), 511–528 (LLPF…IVYY), 535–557 (VVDF…RFLV), and 615–637 (YALY…SIFF).

It belongs to the complex I subunit 5 family.

The protein resides in the mitochondrion inner membrane. It catalyses the reaction a ubiquinone + NADH + 5 H(+)(in) = a ubiquinol + NAD(+) + 4 H(+)(out). Functionally, core subunit of the mitochondrial membrane respiratory chain NADH dehydrogenase (Complex I) that is believed to belong to the minimal assembly required for catalysis. Complex I functions in the transfer of electrons from NADH to the respiratory chain. The immediate electron acceptor for the enzyme is believed to be ubiquinone. The polypeptide is NADH-ubiquinone oxidoreductase chain 5 (nd5) (Hypocrea jecorina (Trichoderma reesei)).